A 345-amino-acid polypeptide reads, in one-letter code: Phosphoribosylformylglycinamidine cyclo-ligase (345 aa).

The protein belongs to the AIR synthase family.

The protein resides in the cytoplasm. The enzyme catalyses 2-formamido-N(1)-(5-O-phospho-beta-D-ribosyl)acetamidine + ATP = 5-amino-1-(5-phospho-beta-D-ribosyl)imidazole + ADP + phosphate + H(+). Its pathway is purine metabolism; IMP biosynthesis via de novo pathway; 5-amino-1-(5-phospho-D-ribosyl)imidazole from N(2)-formyl-N(1)-(5-phospho-D-ribosyl)glycinamide: step 2/2. In Escherichia coli O7:K1 (strain IAI39 / ExPEC), this protein is Phosphoribosylformylglycinamidine cyclo-ligase.